Consider the following 161-residue polypeptide: Large ribosomal subunit protein uL15 (161 aa).

Residues 1-43 (MKLSEISDNPGARKKRMRIGRGIGSGKGKTGGRGGKGQTARSG) are disordered. The span at 21–37 (RGIGSGKGKTGGRGGKG) shows a compositional bias: gly residues.

This sequence belongs to the universal ribosomal protein uL15 family. In terms of assembly, part of the 50S ribosomal subunit.

Functionally, binds to the 23S rRNA. The sequence is that of Large ribosomal subunit protein uL15 from Rhodopseudomonas palustris (strain HaA2).